Here is a 350-residue protein sequence, read N- to C-terminus: Uroporphyrinogen decarboxylase (350 aa).

Substrate contacts are provided by residues 23 to 27 (RQAGR), D73, Y150, T205, and H322.

It belongs to the uroporphyrinogen decarboxylase family. In terms of assembly, homodimer.

The protein localises to the cytoplasm. The enzyme catalyses uroporphyrinogen III + 4 H(+) = coproporphyrinogen III + 4 CO2. Its pathway is porphyrin-containing compound metabolism; protoporphyrin-IX biosynthesis; coproporphyrinogen-III from 5-aminolevulinate: step 4/4. Catalyzes the decarboxylation of four acetate groups of uroporphyrinogen-III to yield coproporphyrinogen-III. The chain is Uroporphyrinogen decarboxylase from Methylococcus capsulatus (strain ATCC 33009 / NCIMB 11132 / Bath).